The chain runs to 389 residues: Succinate--CoA ligase [ADP-forming] subunit beta (389 aa).

Residues 9 to 236 (KELFASHGVP…KDAEDPLEAK (228 aa)) enclose the ATP-grasp domain. ATP-binding positions include Lys45, 52 to 54 (GRG), Ser94, and Glu99. Residues Asn191 and Asp205 each coordinate Mg(2+). Substrate is bound by residues Asn256 and 318–320 (GIT).

It belongs to the succinate/malate CoA ligase beta subunit family. Heterotetramer of two alpha and two beta subunits. It depends on Mg(2+) as a cofactor.

It catalyses the reaction succinate + ATP + CoA = succinyl-CoA + ADP + phosphate. It carries out the reaction GTP + succinate + CoA = succinyl-CoA + GDP + phosphate. Its pathway is carbohydrate metabolism; tricarboxylic acid cycle; succinate from succinyl-CoA (ligase route): step 1/1. Succinyl-CoA synthetase functions in the citric acid cycle (TCA), coupling the hydrolysis of succinyl-CoA to the synthesis of either ATP or GTP and thus represents the only step of substrate-level phosphorylation in the TCA. The beta subunit provides nucleotide specificity of the enzyme and binds the substrate succinate, while the binding sites for coenzyme A and phosphate are found in the alpha subunit. The protein is Succinate--CoA ligase [ADP-forming] subunit beta of Saccharopolyspora erythraea (strain ATCC 11635 / DSM 40517 / JCM 4748 / NBRC 13426 / NCIMB 8594 / NRRL 2338).